A 610-amino-acid chain; its full sequence is Pyruvate decarboxylase 1 (610 aa).

Substrate is bound by residues Asp-72 and His-159. Residues 437-519 form a thiamine pyrophosphate binding region; the sequence is DSWFNCQKLR…FLINNGGYTI (83 aa). The Mg(2+) site is built by Asp-487, Asn-514, and Gly-516. Substrate is bound at residue Glu-520.

This sequence belongs to the TPP enzyme family. Homotetramer. The cofactor is a metal cation. Requires thiamine diphosphate as cofactor.

It catalyses the reaction a 2-oxocarboxylate + H(+) = an aldehyde + CO2. The sequence is that of Pyruvate decarboxylase 1 (PDC1) from Zea mays (Maize).